The following is a 665-amino-acid chain: tRNA 5-methylaminomethyl-2-thiouridine biosynthesis bifunctional protein MnmC (665 aa).

Positions 1–243 (MSQTSLHHAR…KWAMLAGERV (243 aa)) are tRNA (mnm(5)s(2)U34)-methyltransferase. Residues 268–665 (IGGGIASAMT…RKLLKGKPLN (398 aa)) are FAD-dependent cmnm(5)s(2)U34 oxidoreductase.

The protein in the N-terminal section; belongs to the methyltransferase superfamily. tRNA (mnm(5)s(2)U34)-methyltransferase family. It in the C-terminal section; belongs to the DAO family. The cofactor is FAD.

It is found in the cytoplasm. It catalyses the reaction 5-aminomethyl-2-thiouridine(34) in tRNA + S-adenosyl-L-methionine = 5-methylaminomethyl-2-thiouridine(34) in tRNA + S-adenosyl-L-homocysteine + H(+). In terms of biological role, catalyzes the last two steps in the biosynthesis of 5-methylaminomethyl-2-thiouridine (mnm(5)s(2)U) at the wobble position (U34) in tRNA. Catalyzes the FAD-dependent demodification of cmnm(5)s(2)U34 to nm(5)s(2)U34, followed by the transfer of a methyl group from S-adenosyl-L-methionine to nm(5)s(2)U34, to form mnm(5)s(2)U34. The sequence is that of tRNA 5-methylaminomethyl-2-thiouridine biosynthesis bifunctional protein MnmC from Aeromonas salmonicida (strain A449).